Consider the following 521-residue polypeptide: MLWGFVFVSFISKELALGQSEYISWVKCTSWLSNFVNLRGLRQPDGRPLYEYHATNDEYTQLTQLLRAVGQSQSNICNRDFAACFVLFCSEWYRRDYERQCGWTWDPIYKKIGISFTATELGTIVPKGMEDYWLRPIRFYESERRNFLGTLFSEGGLPFRLLKESDSRFLAVFSRILGQYEQAKQSGFSALSLARAVIEKSALPTVFSEDTSVELISHMADNLNSLVLTHNLINHKEPVQQLEKVHPTWRSEFPIPLDDETGTHFLNGLLCAASVEAKPRLQKNKSTRCQFYWSEKHPDELRVIVSLPDEVSFPVTSEPSTTRFELAICEDGEEVSGLGPAYASLENRQATVRLRKSEVRFGRQNPSAGLSLVARAGGMIVGSIKLDDSEIAIGEVPLTFIVDADQWLLQGQASCSVRSSDVLIVLPRDNSNVAGFDGQSRAVNVLGLKALPVKGCQDVTVTANETYRIRTGREQISIGRFALNGKRASWVCHPDETFIGVPKVISTLPDIQSIDVTRYTC.

The protein is Protein YjiT (yjiT) of Escherichia coli (strain K12).